A 417-amino-acid polypeptide reads, in one-letter code: MFRRLLIATIIGILAALAVAGFRHAMLVLEWLFLRNDTGSLVNAATNLSPWRRLITPAVGGLAAGALLWGWQKMNQQRPHAPTDYMEALQTDGQFDYGASLVKSLASLLVVASGSAIGREGAMILLAALAASCFAQRCTPREEWKLWIACGAAAGMASAYHAPLAGSLFIAEILFGTLMLASLGPVVISAVVALLTTHLLSGGNALLYTVHLSLDLHVREYAMIISTGLVAGVCGPLFMWLMTTTHNGFIRLKLSPPWQLALGGFIVGLLSLLTPAVWGNGYSVVQSFLLSPPLLSVIAGIFICKLLAVLASSGSGAPGGVFTPTLFIGLSIGMLYGRMWGFWLPGADEMAILLGLTGMATLLAATTHAPMMSTLMICEMTGEYRLLPGLLIACVVASVLSRTLREDSVYRQHTAEH.

Transmembrane regions (helical) follow at residues 5–25 (LLIA…FRHA), 54–74 (LITP…WQKM), 146–166 (LWIA…PLAG), 168–188 (LFIA…PVVI), 190–210 (AVVA…LYTV), 222–242 (AMII…MWLM), 258–278 (WQLA…PAVW), 288–308 (FLLS…KLLA), 316–336 (GAPG…GMLY), 339–359 (MWGF…LTGM), and 380–400 (MTGE…ASVL).

It belongs to the chloride channel (TC 2.A.49) family. ClcB subfamily.

The protein localises to the cell inner membrane. Its function is as follows. Probably acts as an electrical shunt for an outwardly-directed proton pump that is linked to amino acid decarboxylation, as part of the extreme acid resistance (XAR) response. In Citrobacter koseri (strain ATCC BAA-895 / CDC 4225-83 / SGSC4696), this protein is Voltage-gated ClC-type chloride channel ClcB.